The sequence spans 352 residues: Uroporphyrinogen decarboxylase (352 aa).

Residues 27 to 31, aspartate 77, tyrosine 154, threonine 209, and histidine 325 contribute to the substrate site; that span reads RQAGR.

This sequence belongs to the uroporphyrinogen decarboxylase family. In terms of assembly, homodimer.

Its subcellular location is the cytoplasm. The enzyme catalyses uroporphyrinogen III + 4 H(+) = coproporphyrinogen III + 4 CO2. It functions in the pathway porphyrin-containing compound metabolism; protoporphyrin-IX biosynthesis; coproporphyrinogen-III from 5-aminolevulinate: step 4/4. Catalyzes the decarboxylation of four acetate groups of uroporphyrinogen-III to yield coproporphyrinogen-III. The chain is Uroporphyrinogen decarboxylase from Legionella pneumophila (strain Paris).